We begin with the raw amino-acid sequence, 625 residues long: Glucose dehydrogenase [FAD, quinone] (625 aa).

Positions 1–42 are cleaved as a signal peptide; that stretch reads MATSPSSCDCLVGVPTGPTLASTCGGSAFMLFMGLLEVFIRS. Residue 66–95 participates in FAD binding; it reads DFIVIGGGSAGSVVASRLSEVPQWKVLLIE. Histidine 544 serves as the catalytic Proton acceptor. Position 613 (selenocysteine 613) is a non-standard amino acid, selenocysteine.

It belongs to the GMC oxidoreductase family. The cofactor is FAD.

Its subcellular location is the secreted. The enzyme catalyses a quinone + D-glucose = D-glucono-1,5-lactone + a quinol. The chain is Glucose dehydrogenase [FAD, quinone] (Gld) from Drosophila pseudoobscura pseudoobscura (Fruit fly).